Consider the following 344-residue polypeptide: Uroporphyrinogen decarboxylase (344 aa).

Substrate-binding positions include Arg-23–Arg-27, Asp-73, Tyr-149, Thr-204, and His-321.

It belongs to the uroporphyrinogen decarboxylase family. In terms of assembly, homodimer.

The protein resides in the cytoplasm. It carries out the reaction uroporphyrinogen III + 4 H(+) = coproporphyrinogen III + 4 CO2. It participates in porphyrin-containing compound metabolism; protoporphyrin-IX biosynthesis; coproporphyrinogen-III from 5-aminolevulinate: step 4/4. Catalyzes the decarboxylation of four acetate groups of uroporphyrinogen-III to yield coproporphyrinogen-III. This is Uroporphyrinogen decarboxylase from Francisella tularensis subsp. mediasiatica (strain FSC147).